We begin with the raw amino-acid sequence, 423 residues long: Dihydrolipoyllysine-residue succinyltransferase component of 2-oxoglutarate dehydrogenase complex (423 aa).

Residues Met1–Gly76 form the Lipoyl-binding domain. An N6-lipoyllysine modification is found at Lys42. The interval Gly76–Asn185 is disordered. Residues Gly80–Asp96 show a composition bias toward polar residues. Positions Thr99–Glu115 are enriched in basic and acidic residues. Positions Val116–Pro131 are enriched in polar residues. The region spanning Asn128–Gln164 is the Peripheral subunit-binding (PSBD) domain. Residues Asp153–Gln164 show a composition bias toward basic and acidic residues. The segment covering Gln165–Pro177 has biased composition (low complexity). Catalysis depends on residues His394 and Asp398.

It belongs to the 2-oxoacid dehydrogenase family. As to quaternary structure, forms a 24-polypeptide structural core with octahedral symmetry. Part of the 2-oxoglutarate dehydrogenase (OGDH) complex composed of E1 (2-oxoglutarate dehydrogenase), E2 (dihydrolipoamide succinyltransferase) and E3 (dihydrolipoamide dehydrogenase); the complex contains multiple copies of the three enzymatic components (E1, E2 and E3). It depends on (R)-lipoate as a cofactor.

The catalysed reaction is N(6)-[(R)-dihydrolipoyl]-L-lysyl-[protein] + succinyl-CoA = N(6)-[(R)-S(8)-succinyldihydrolipoyl]-L-lysyl-[protein] + CoA. It functions in the pathway amino-acid degradation; L-lysine degradation via saccharopine pathway; glutaryl-CoA from L-lysine: step 6/6. Its function is as follows. E2 component of the 2-oxoglutarate dehydrogenase (OGDH) complex which catalyzes the second step in the conversion of 2-oxoglutarate to succinyl-CoA and CO(2). The chain is Dihydrolipoyllysine-residue succinyltransferase component of 2-oxoglutarate dehydrogenase complex (odhB) from Staphylococcus aureus (strain MRSA252).